We begin with the raw amino-acid sequence, 887 residues long: Pyruvate dehydrogenase E1 component (887 aa).

In terms of assembly, homodimer. Part of the PDH complex, consisting of multiple copies of pyruvate dehydrogenase (E1), dihydrolipoamide acetyltransferase (E2) and lipoamide dehydrogenase (E3). It depends on thiamine diphosphate as a cofactor.

The catalysed reaction is N(6)-[(R)-lipoyl]-L-lysyl-[protein] + pyruvate + H(+) = N(6)-[(R)-S(8)-acetyldihydrolipoyl]-L-lysyl-[protein] + CO2. Functionally, component of the pyruvate dehydrogenase (PDH) complex, that catalyzes the overall conversion of pyruvate to acetyl-CoA and CO(2). This chain is Pyruvate dehydrogenase E1 component (aceE), found in Buchnera aphidicola subsp. Acyrthosiphon pisum (strain APS) (Acyrthosiphon pisum symbiotic bacterium).